A 992-amino-acid chain; its full sequence is Leucine-rich repeat receptor-like serine/threonine-protein kinase BAM3 (992 aa).

An N-terminal signal peptide occupies residues 1-21; that stretch reads MADKIFTFFLILSSISPLLCS. The Extracellular portion of the chain corresponds to 22-656; that stretch reads SLISPLNLSL…ARSRGEISAK (635 aa). A glycan (N-linked (GlcNAc...) asparagine) is linked at N28. An intrachain disulfide couples C64 to C71. N75 and N87 each carry an N-linked (GlcNAc...) asparagine glycan. LRR repeat units lie at residues 75–99, 100–124, 126–148, 150–173, 174–199, and 201–221; these read NQSI…ISRL, SPSL…IYEL, GLEV…GFSQ, TQLV…LTTL, TRLE…SFLS, and KFLS…LANI. N-linked (GlcNAc...) asparagine glycosylation is found at N131 and N163. A glycan (N-linked (GlcNAc...) asparagine) is linked at N220. The CLE45 peptide binding signature appears at 226 to 231; the sequence is QLYLGY. LRR repeat units lie at residues 246–270, 271–294, 296–320, 322–342, 343–366, 368–391, 393–414, 415–438, 439–462, 465–489, 491–513, 514–536, 537–561, 563–585, and 586–610; these read LINL…LGNL, KNLE…LGNM, SLKT…GLQK, QLFN…VSEL, PDLQ…LGSN, NLIE…CFGR, LKIL…LGQC, EPLW…LIYL, PNLS…EAGN, FSSL…IRNL, SLQI…IGSL, KSLL…EFGD, CMSL…ISQI, ILNY…LGYM, and KSLT…QFSY. N-linked (GlcNAc...) asparagine glycans are attached at residues N256 and N293. The N-linked (GlcNAc...) asparagine glycan is linked to N354. N440 and N472 each carry an N-linked (GlcNAc...) asparagine glycan. N525 is a glycosylation site (N-linked (GlcNAc...) asparagine). 6 N-linked (GlcNAc...) asparagine glycosylation sites follow: N568, N575, N597, N613, N631, and N635. A helical membrane pass occupies residues 657-677; it reads FKLFFGLGLLGFFLVFVVLAV. Topologically, residues 678 to 992 are cytoplasmic; the sequence is VKNRRMRKNN…ISQAKQPNTF (315 aa). The region spanning 710 to 992 is the Protein kinase domain; it reads VKENHVIGKG…ISQAKQPNTF (283 aa). Residues 716-724 and K738 each bind ATP; that span reads IGKGGRGIV. D836 functions as the Proton acceptor in the catalytic mechanism.

It belongs to the protein kinase superfamily. Ser/Thr protein kinase family. In terms of assembly, interacts with CLE45, especially in roots. Binds to the dimer CLV2/CRN. Expressed in seedlings, roots, leaves, stems, inflorescences, flowers and siliques. In roots, confined to protophloem and sieve element precursor cells.

Its subcellular location is the cell membrane. The protein localises to the endoplasmic reticulum membrane. The enzyme catalyses L-seryl-[protein] + ATP = O-phospho-L-seryl-[protein] + ADP + H(+). The catalysed reaction is L-threonyl-[protein] + ATP = O-phospho-L-threonyl-[protein] + ADP + H(+). In terms of biological role, necessary for male gametophyte development, as well as ovule specification and function. Required for the development of high-ordered vascular strands within the leaf and a correlated control of leaf shape, size and symmetry. LRR-rich receptor-like kinase (LRR-RLK) involved in the perception of CLE45 peptide ligand which mediates root growth inhibition by repressing protophloem differentiation; this mechanism requires CRN. BRX, BAM3, and CLE45 act together to regulate the transition of protophloem cells from proliferation to differentiation, thus impinging on postembryonic growth capacity of the root meristem. Necessary for CLE45 peptide-triggered accumulation of MAKR5 in developing sieve elements. The sequence is that of Leucine-rich repeat receptor-like serine/threonine-protein kinase BAM3 from Arabidopsis thaliana (Mouse-ear cress).